A 124-amino-acid chain; its full sequence is Putative transmembrane protein FLJ36131 (124 aa).

Residues 1–2 (MY) are Cytoplasmic-facing. A helical transmembrane segment spans residues 3–23 (VSISFLLGLSHLVLCCLLTFI). Residues 24-124 (VNFYLPPESI…LLTTTSYSVS (101 aa)) lie on the Extracellular side of the membrane. N41 carries an N-linked (GlcNAc...) asparagine glycan.

The protein localises to the membrane. The sequence is that of Putative transmembrane protein FLJ36131 from Homo sapiens (Human).